The following is a 356-amino-acid chain: MKIAVLPGDGIGTEIVAEAVKVLNALDLKLEMETALVGGAAYEAFGHPLPDATLKLAKEADAVLFGAVGDWKYDKLDRPLRPEQAILGLRKNLGLFANFRPAICYEQLVDASSLKPELIAGLDILIIRELTGDIYFGQPRGRRTATDGHFPGAEEAFDTMRYSRPEIERIAHVAFQAARKRSKRVTSVDKANVLETFQFWRDVLTEVGQQYPDVELDHMYVDNAAMQLVRAPKKFDVVVTGNLFGDILSDEAAMLTGSIGMLPSASLNASSQGLYEPSHGSAPDIAGKGVANPLATILSAAMMLRFSLNQEVAAQRIEAAVKDVLVQGLRTADIFSTGTTRVSTVEMGAAVVKALK.

Substrate is bound by residues Arg-90, Arg-100, Arg-128, and Asp-222. Positions 222, 246, and 250 each coordinate Mg(2+). NAD(+) is bound at residue 280 to 292 (GSAPDIAGKGVAN).

This sequence belongs to the isocitrate and isopropylmalate dehydrogenases family. LeuB type 1 subfamily. As to quaternary structure, homodimer. Requires Mg(2+) as cofactor. The cofactor is Mn(2+).

The protein resides in the cytoplasm. It carries out the reaction (2R,3S)-3-isopropylmalate + NAD(+) = 4-methyl-2-oxopentanoate + CO2 + NADH. Its pathway is amino-acid biosynthesis; L-leucine biosynthesis; L-leucine from 3-methyl-2-oxobutanoate: step 3/4. Its function is as follows. Catalyzes the oxidation of 3-carboxy-2-hydroxy-4-methylpentanoate (3-isopropylmalate) to 3-carboxy-4-methyl-2-oxopentanoate. The product decarboxylates to 4-methyl-2 oxopentanoate. The chain is 3-isopropylmalate dehydrogenase from Albidiferax ferrireducens (strain ATCC BAA-621 / DSM 15236 / T118) (Rhodoferax ferrireducens).